A 154-amino-acid chain; its full sequence is uncharacterized protein (154 aa).

The first 21 residues, 1–21 (MSISSGSFAQPAAVVSSPGVT), serve as a signal peptide directing secretion.

It belongs to the ivy family.

It is found in the periplasm. This is an uncharacterized protein from Yersinia pestis.